Consider the following 231-residue polypeptide: Orotidine 5'-phosphate decarboxylase (231 aa).

Residues Asp-11, Lys-34, 61-70 (DLKLHDIPNT), Thr-117, Arg-179, Gln-188, Gly-208, and Arg-209 each bind substrate. Lys-63 acts as the Proton donor in catalysis.

It belongs to the OMP decarboxylase family. Type 1 subfamily. As to quaternary structure, homodimer.

The enzyme catalyses orotidine 5'-phosphate + H(+) = UMP + CO2. Its pathway is pyrimidine metabolism; UMP biosynthesis via de novo pathway; UMP from orotate: step 2/2. Catalyzes the decarboxylation of orotidine 5'-monophosphate (OMP) to uridine 5'-monophosphate (UMP). In Streptococcus suis (strain 98HAH33), this protein is Orotidine 5'-phosphate decarboxylase.